Here is a 161-residue protein sequence, read N- to C-terminus: MSTTPTLSHLDESGQIRMVDVGHKTDTDRVAIARGSVRMNATAYGLLTQPGQGKGEVLNTARVAAVLAAKRCAELIPLCHSLPLAFVGIDFELDEAAYSVHIRATCRTQYKTGVEMEAMTACSVAALTIYDMCKAADKGIVIEQIRLQYKAGGKSGEWRND.

Substrate is bound by residues leucine 78–histidine 80 and methionine 116–glutamate 117. Residue aspartate 131 is part of the active site.

Belongs to the MoaC family. In terms of assembly, homohexamer; trimer of dimers.

The enzyme catalyses (8S)-3',8-cyclo-7,8-dihydroguanosine 5'-triphosphate = cyclic pyranopterin phosphate + diphosphate. It functions in the pathway cofactor biosynthesis; molybdopterin biosynthesis. Functionally, catalyzes the conversion of (8S)-3',8-cyclo-7,8-dihydroguanosine 5'-triphosphate to cyclic pyranopterin monophosphate (cPMP). This Bordetella parapertussis (strain 12822 / ATCC BAA-587 / NCTC 13253) protein is Cyclic pyranopterin monophosphate synthase.